A 429-amino-acid polypeptide reads, in one-letter code: SET domain-containing protein 8 (429 aa).

Residues 17 to 232 (KQITIKKIRK…ENEEVTINYG (216 aa)) enclose the SET domain.

The protein belongs to the class V-like SAM-binding methyltransferase superfamily.

Its subcellular location is the cytoplasm. It is found in the nucleus. The polypeptide is SET domain-containing protein 8 (set8) (Schizosaccharomyces pombe (strain 972 / ATCC 24843) (Fission yeast)).